The sequence spans 421 residues: Ameloblastin (421 aa).

The N-terminal stretch at 1-26 (MPALKIPLFKMKDMVLILCLLKMSSA) is a signal peptide. Proline 37 carries the post-translational modification Hydroxyproline. The residue at position 43 (serine 43) is a Phosphoserine. Disordered regions lie at residues 104–126 (PVHP…QKPF), 264–311 (GGMP…ADPE), and 333–421 (GKIP…FQEP). Serine 112 carries an O-linked (GalNAc...) serine glycan. Residues 113–125 (QPSLQPQQPGQKP) show a composition bias toward low complexity. Residues 339–350 (ARGPAGRSRGPP) are compositionally biased toward low complexity. Residues 388-410 (MDSTATPYSEHTSMPGNKAQQPQ) show a composition bias toward polar residues. Residues 411-421 (IKRDAWRFQEP) are compositionally biased toward basic and acidic residues.

This sequence belongs to the ameloblastin family. In terms of tissue distribution, ameloblast-specific. Located at the Tomes processes of secretory ameloblasts and in the sheath space between rod-interrod enamel.

The protein localises to the secreted. It is found in the extracellular space. The protein resides in the extracellular matrix. Involved in the mineralization and structural organization of enamel. The sequence is that of Ameloblastin (AMBN) from Sus scrofa (Pig).